Consider the following 240-residue polypeptide: MHLEFTTGQTQTAVSLMPRHLDDCLRELILINQKKDAIDILEWRLDYWQAPAQLLTAAEKIAALDLPLILTVRTTNDGGLASAQDYLTYYAPLIKAHIGQAIDLEWSLAAEQRHQLAELAHQQHYQVLLSHHDTVQTPDNDTLRTQLLAMQADPDADLLKLATTAQSPADTTRLLAATQSFTHQFDKPLTTMAMSEFGVASRIFGGQFGSAISFGYLETPSAPGQLPIEQLKGLLTTNQA.

3-dehydroquinate contacts are provided by residues Ser-15, 42–44, and Arg-73; that span reads EWR. Residue His-132 is the Proton donor/acceptor of the active site. Lys-160 serves as the catalytic Schiff-base intermediate with substrate. Positions 202, 221, and 225 each coordinate 3-dehydroquinate.

This sequence belongs to the type-I 3-dehydroquinase family. As to quaternary structure, homodimer.

It catalyses the reaction 3-dehydroquinate = 3-dehydroshikimate + H2O. Its pathway is metabolic intermediate biosynthesis; chorismate biosynthesis; chorismate from D-erythrose 4-phosphate and phosphoenolpyruvate: step 3/7. Functionally, involved in the third step of the chorismate pathway, which leads to the biosynthesis of aromatic amino acids. Catalyzes the cis-dehydration of 3-dehydroquinate (DHQ) and introduces the first double bond of the aromatic ring to yield 3-dehydroshikimate. The protein is 3-dehydroquinate dehydratase of Latilactobacillus sakei subsp. sakei (strain 23K) (Lactobacillus sakei subsp. sakei).